The chain runs to 347 residues: Fructose-1,6-bisphosphatase class 1 2 (347 aa).

Mg(2+) contacts are provided by Glu92, Asp111, Leu113, and Asp114. Substrate is bound by residues 114–117 (DGSS) and Asn202. Glu274 serves as a coordination point for Mg(2+).

It belongs to the FBPase class 1 family. Homotetramer. Mg(2+) serves as cofactor.

The protein localises to the cytoplasm. The enzyme catalyses beta-D-fructose 1,6-bisphosphate + H2O = beta-D-fructose 6-phosphate + phosphate. It functions in the pathway carbohydrate biosynthesis; Calvin cycle. The sequence is that of Fructose-1,6-bisphosphatase class 1 2 from Bradyrhizobium sp. (strain BTAi1 / ATCC BAA-1182).